Reading from the N-terminus, the 711-residue chain is Polyribonucleotide nucleotidyltransferase (711 aa).

Residues aspartate 486 and aspartate 492 each coordinate Mg(2+). The 60-residue stretch at 553–612 (PRIHTIKINPDKIKDVIGKGGSVIRALTEETGTTIEIEDDGTVKIAATDGEKAKHAIRRI) folds into the KH domain. The region spanning 622–690 (GRVYNGKVTR…RQGRIRLSIK (69 aa)) is the S1 motif domain. The disordered stretch occupies residues 690-711 (KEATEQSQPAAALEAPAAEQGE). Positions 698 to 711 (PAAALEAPAAEQGE) are enriched in low complexity.

Belongs to the polyribonucleotide nucleotidyltransferase family. As to quaternary structure, component of the RNA degradosome, which is a multiprotein complex involved in RNA processing and mRNA degradation. Mg(2+) serves as cofactor.

It localises to the cytoplasm. It carries out the reaction RNA(n+1) + phosphate = RNA(n) + a ribonucleoside 5'-diphosphate. Involved in mRNA degradation. Catalyzes the phosphorolysis of single-stranded polyribonucleotides processively in the 3'- to 5'-direction. In Escherichia coli O127:H6 (strain E2348/69 / EPEC), this protein is Polyribonucleotide nucleotidyltransferase.